The sequence spans 211 residues: UPF0056 membrane protein BUsg_257 (211 aa).

The next 6 helical transmembrane spans lie at 14–34 (FFVS…FTTM), 54–74 (AFII…AFGI), 76–96 (INSF…SMIS), 116–136 (VVPL…TIVW), 144–164 (SDFL…WLCF), and 185–205 (IMGL…IKSI).

This sequence belongs to the UPF0056 (MarC) family.

It is found in the cell membrane. In Buchnera aphidicola subsp. Schizaphis graminum (strain Sg), this protein is UPF0056 membrane protein BUsg_257.